We begin with the raw amino-acid sequence, 333 residues long: Homeobox protein HMX1 (333 aa).

3 disordered regions span residues Met1–Ala74, Gly86–Cys109, and Cys139–Thr204. The segment covering Asp17–Ala30 has biased composition (polar residues). The span at Thr87–Gly105 shows a compositional bias: gly residues. The segment covering Thr144–Arg158 has biased composition (basic and acidic residues). The span at Ala159–Ser176 shows a compositional bias: gly residues. Over residues Glu181–Glu192 the composition is skewed to acidic residues. Positions Lys201–Leu260 form a DNA-binding region, homeobox. The short motif at Ala261–His271 is the HMX family specific domain 1 element.

This sequence belongs to the HMX homeobox family.

It localises to the nucleus. Functionally, DNA-binding protein that binds to the 5'-CAAG-3' core sequence. May function as a transcriptional repressor. Seems to act as a transcriptional antagonist of NKX2-5. May play an important role in the development of craniofacial structures such as the eye and ear. The polypeptide is Homeobox protein HMX1 (HMX1) (Gallus gallus (Chicken)).